A 478-amino-acid polypeptide reads, in one-letter code: MSSESGKPIAKPIRKPGYTNPALKALGIPALRLPSRNWMIFWSVLTVSIGGIAYDKYKQRQILSHATDLVKPLAEESMEVDKVPRKITVFIAPPPNDYLESSLKVWRRYVKPVLYYAGLDYELVQEDRQGIIRTNVANRIRELRKEILASTDGQPVKEPNQTVAKPSGSSTSKISSLLPFNKIIQDPAEEDDSFDPEIGKKFKENFDWRNVIGIFYTMPKPKHIISEDALTKDPILSGGVICLGRGAYKEYIAGIHEGLLGPIEKTEKTGSTEPKMTGVVEANQIESKVSESGATELVDAEKETALEEAKVQDDLKVDEENSSEDSQKFLKPFISSDQYPDLQIASELQTPNGEFIRNPNTNIPLLINQPLLVIPIPNLIGFTTIPRRIHRFYQKRFYVEDVCSSVVNCVRQTRIRPFDIAKDIDLAKDEEKDWPQNWVKQGKEKNSEWTQELVCDPRITKHMFVYEKPPKEEPESDI.

Residues 1–32 (MSSESGKPIAKPIRKPGYTNPALKALGIPALR) are Mitochondrial matrix-facing. A helical transmembrane segment spans residues 33 to 49 (LPSRNWMIFWSVLTVSI). Residues 50–478 (GGIAYDKYKQ…PPKEEPESDI (429 aa)) are Mitochondrial intermembrane-facing. The tract at residues 152-171 (DGQPVKEPNQTVAKPSGSST) is disordered.

The protein belongs to the TIM54 family. Component of the TIM22 complex, whose core is composed of TIM18, TIM22 and TIM54, associated with the peripheral proteins MRS5/TIM12 and the 70 kDa heterohexamer composed of TIM9 and TIM10 (or TIM8 and TIM13).

The protein resides in the mitochondrion inner membrane. In terms of biological role, essential component of the TIM22 complex, a complex that mediates the import and insertion of multi-pass transmembrane proteins into the mitochondrial inner membrane. The TIM22 complex forms a twin-pore translocase that uses the membrane potential as external driving force. Its precise function within the TIM22 complex is unclear. The polypeptide is Mitochondrial import inner membrane translocase subunit TIM54 (TIM54) (Saccharomyces cerevisiae (strain ATCC 204508 / S288c) (Baker's yeast)).